The primary structure comprises 587 residues: Trihelix transcription factor GTL1 (587 aa).

Composition is skewed to gly residues over residues 1-10 and 41-54; these read MEQGGGGGGN and GGLGGGGGGGGGGS. Residues 1–63 are disordered; sequence MEQGGGGGGN…SASSSSGNRW (63 aa). The Myb-like 1 domain maps to 55–119; it reads ASSSSGNRWP…KCKEKFENVQ (65 aa). The Nuclear localization signal 1 signature appears at 96–103; it reads SRKLLELG. Low complexity predominate over residues 173-194; the sequence is SSSPFPVFSQPQPQTQTQPPQT. Positions 173 to 264 are disordered; sequence SSSPFPVFSQ…RKRGNRGGGG (92 aa). The span at 201–210 shows a compositional bias: pro residues; it reads PTPPPLPLPS. The span at 221–232 shows a compositional bias: low complexity; sequence SSHSSSTASGMG. Acidic residues predominate over residues 233–242; that stretch reads SDDDDDDMDV. Residues 285-328 are a coiled coil; the sequence is QRSFLEALEKREQERLDREEAWKRQEMARLAREHEVMSQERAAS. The disordered stretch occupies residues 348–435; the sequence is QLPPSLSSQP…EQSSLPSSSR (88 aa). Over residues 356–366 the composition is skewed to pro residues; it reads QPPPPYQPPPA. 2 stretches are compositionally biased toward low complexity: residues 379 to 395 and 411 to 434; these read AQSQSQQPIMAIPQQQI and QKQQQQPQQEMVMSSEQSSLPSSS. Residues 434-492 form the Myb-like 2 domain; the sequence is SRWPKAEILALINLRSGMEPRYQDNVPKGLLWEEISTSMKRMGYNRNAKRCKEKWENIN. The Nuclear localization signal 2 signature appears at 472–479; that stretch reads MKRMGYNR. The disordered stretch occupies residues 530–587; it reads GGGSSTSGLPQDQKQSPVTAMKPPQEGLVNVQQTHGSASTEEEEPIEESPQGTEKKTL. Composition is skewed to polar residues over residues 538-547 and 559-568; these read LPQDQKQSPV and NVQQTHGSAS.

In terms of tissue distribution, mostly expressed in siliques, and, to a lower extent, in growing root hairs, leaves, stems, and flowers. Present in abaxial epidermal cells, predominantly in guard cells, pavement cells, and meristemoids.

It is found in the nucleus. Its function is as follows. Transcription repressor that binds specific DNA sequence such as GT3 box 5'-GGTAAA-3' in the SDD1 promoter. Negative regulator of water use efficiency (WUE) via the promotion of stomatal density and distribution by the transcription repression of SDD1. Regulates the expression of several cell cycle genes and endoreduplication, especially in trichomes where it prevents ploidy-dependent plant cell growth. Regulates negatively root hair growth by directly binding RSL4 promoter and repressing RSL4 expression. This Arabidopsis thaliana (Mouse-ear cress) protein is Trihelix transcription factor GTL1.